The chain runs to 318 residues: MIDLSPLVRRLAGTPLACWSQGLQAQLQAKLEKGHGDLERWRGALDALPALLPSEIDLVDGLRLDCDCDDGTRAQMRQALMGLSPWRKGPFDLFGVHVDTEWRSDWKWSRVAPHLDLQGKRVLDVGCGNGYYQWRMLGAGADMVIGVDPNWLFFCQFQAVQRYLPDLPAWHLPFALEELPANLEGFDTVFSMGVFYHRRSPIEHLLALKDCLVKGGELVLETLVVEGDEQQVLVPEDRYAQMRNVWYLPSVPALERWLRRAGFSDVRCVDVSVTSVEEQRSTEWMRYQSLGDFLDPNDHSKTIEGLPAPRRATLLARK.

Carboxy-S-adenosyl-L-methionine-binding positions include lysine 88, tryptophan 102, lysine 107, glycine 126, 176 to 177, methionine 192, tyrosine 196, and arginine 311; that span reads LE.

It belongs to the class I-like SAM-binding methyltransferase superfamily. CmoB family. Homotetramer.

It carries out the reaction carboxy-S-adenosyl-L-methionine + 5-hydroxyuridine(34) in tRNA = 5-carboxymethoxyuridine(34) in tRNA + S-adenosyl-L-homocysteine + H(+). Catalyzes carboxymethyl transfer from carboxy-S-adenosyl-L-methionine (Cx-SAM) to 5-hydroxyuridine (ho5U) to form 5-carboxymethoxyuridine (cmo5U) at position 34 in tRNAs. The chain is tRNA U34 carboxymethyltransferase from Pseudomonas putida (strain W619).